The following is a 503-amino-acid chain: Cytochrome P450 3A25 (503 aa).

A heme-binding site is contributed by Cys-442.

The protein belongs to the cytochrome P450 family. It depends on heme as a cofactor.

It localises to the endoplasmic reticulum membrane. The protein resides in the microsome membrane. It catalyses the reaction an organic molecule + reduced [NADPH--hemoprotein reductase] + O2 = an alcohol + oxidized [NADPH--hemoprotein reductase] + H2O + H(+). Cytochromes P450 are a group of heme-thiolate monooxygenases. In liver microsomes, this enzyme is involved in an NADPH-dependent electron transport pathway. It oxidizes a variety of structurally unrelated compounds, including steroids, fatty acids, and xenobiotics. The chain is Cytochrome P450 3A25 (Cyp3a25) from Mus musculus (Mouse).